Here is a 308-residue protein sequence, read N- to C-terminus: Acyltransferase drtE (308 aa).

The region spanning 35 to 159 is the AB hydrolase-1 domain; the sequence is PALVMNPGYN…AAEAKDNFSR (125 aa).

It belongs to the polyketide transferase af380 family.

Its pathway is secondary metabolite biosynthesis; terpenoid biosynthesis. Functionally, acyltransferase; part of the gene cluster that mediates the biosynthesis of various drimane-type sesquiterpene esters, compounds that exhibit diverse biological activities and are widely present in eukaryotes. The pathway begins with the synthesis of the backbone drimenol by the terpene cyclase drtB using farnesyl pyrophosphate (FPP) as substrate. The cytochrome P450 monooxygenase drtD is then responsible for the hydroxylations at C-6, C-9 and C-12, as well as the oxidation of hydroxyl groups at C-6 and C-11 to a ketone and an aldehyde, respectively. Then, the biosynthesis can go in two directions, either the hydroxylated drimenol is further hydroxylated at C-2 and C-3 by an enzyme(s) not associated with the drt cluster, or the FAD-binding oxidoreductase drtC further oxidizes C-11 or C-12 to form the butyrolactone ring. DrtB, drtD and drtC are solely responsible for the formation of the different drimane structures observed during drimane sesquiterpenes biosynthesis. The polyketide synthase drtA synthesizes different lengths (C6 and C8) of PKS chains, which are then oxidized to varying degrees by the short-chain dehydrogenase drtF. Finally, these PKS chains are transferred onto drimane sesquiterpenes by the acyltransferase drtE, forming the sesquiterpene esters. In addition to the different fatty acyl-CoA chains produced by drtA, drtE is also able to use cinnamoyl-CoA as a substrate. This Aspergillus calidoustus protein is Acyltransferase drtE.